The sequence spans 63 residues: uncharacterized protein (63 aa).

A helical membrane pass occupies residues Ile-15–Val-37.

It localises to the membrane. This is an uncharacterized protein from Saccharomyces cerevisiae (strain ATCC 204508 / S288c) (Baker's yeast).